A 483-amino-acid polypeptide reads, in one-letter code: UDP-N-acetylmuramate--L-alanine ligase (483 aa).

An ATP-binding site is contributed by 128-134 (GTHGKTT).

The protein belongs to the MurCDEF family.

The protein resides in the cytoplasm. It catalyses the reaction UDP-N-acetyl-alpha-D-muramate + L-alanine + ATP = UDP-N-acetyl-alpha-D-muramoyl-L-alanine + ADP + phosphate + H(+). It functions in the pathway cell wall biogenesis; peptidoglycan biosynthesis. Functionally, cell wall formation. The sequence is that of UDP-N-acetylmuramate--L-alanine ligase from Shewanella violacea (strain JCM 10179 / CIP 106290 / LMG 19151 / DSS12).